A 979-amino-acid chain; its full sequence is MLKLIKIEIEGFKSFADPISINFDGSVVGIVGPNGSGKSNINDAIRWVLGEQSAKQLRGLNMDDVIFAGSKTVKPQEKAMVKLTFKNEDAIEETKQIFTISRLLKRGQGTNEYFYNDQPVRYKDIKNLAVESGISKSSLAIISQGTISEIAEATPEQRKAVIEEAAGTSKYKLDKEEAQKKLIRTNDAIDKLQGAIKELERQVNSLDKQASKAKIYLEKSKALESVEVGLIVNDLNFFNEKLNNLNTSLLEVEQQRNDLELNIQTYESSISQTVHFKTEVESSIQEITSKLDNLKNALSEINLQEARIEERRKLIISGEIVVDQKTKIEEIKKQVESLKIQINASKQREIELDQQLTRLNAKANSLKLQENDINKEIGVLLEKKSAAAANINILKQQFENKSFLSKGIKTIKDNSFLFDGYIGLASELFKVESEFSLAIETVLGAALNQIVMKTSEDVLQAIDFLKKNLSGKATFIPLTSIKEREVREDHLLVLKGQKGFLGVAKELIEFDTQFNKLFGFLLGNILVVDNVDNANRIAKILDHKYTIVSLEGDLFRPGGTITGGSKLERTSILNYDIKIKEHTNTLKFAEDQIHDLKIKQQTIYNEIETVNSTIQQVKIEANSINSKLNILNEELNNLKLNASEIFKEQQEDQESLNLSFDSEKLNIEKQISTLTIELNSKKDRLTNLISEQGKGETKKQELDAKLRKLNTQHSDSITEQNRAKFLVEQNQKRLSEHYKLTLEAASEQYSLDLDIEQARHFVDSLKKELKELGNVNLEAITEFEEVNQRYQEKKQYIEELTTAKSKIEEAISDLDKIIINKTTEIVNLVNNEFNMVFQKMFGGGKAEIHFTDKNDILNSGVEISAQPPGKTIKNLRLFSGGEKAIIAISLLFAILKARPIPLCILDEVEAALDESNVIRYVEFLKLLKENTQFLIITHRSGTMSRVDQLLGVTMQKRGVTSIFSVELSKAKEMLKDELK.

33 to 40 (PNGSGKSN) is a binding site for ATP. Positions 169 to 400 (SKYKLDKEEA…INILKQQFEN (232 aa)) form a coiled coil. The SMC hinge domain maps to 419–538 (DGYIGLASEL…DNVDNANRIA (120 aa)). 2 coiled-coil regions span residues 572–716 (ILNY…HSDS) and 750–818 (SLDL…DKII).

This sequence belongs to the SMC family. As to quaternary structure, homodimer.

The protein localises to the cytoplasm. In terms of biological role, required for chromosome condensation and partitioning. In Mesomycoplasma hyorhinis (Mycoplasma hyorhinis), this protein is Chromosome partition protein Smc.